A 202-amino-acid polypeptide reads, in one-letter code: GTP cyclohydrolase 1 (202 aa).

The Zn(2+) site is built by cysteine 93, histidine 96, and cysteine 164.

It belongs to the GTP cyclohydrolase I family. In terms of assembly, toroid-shaped homodecamer, composed of two pentamers of five dimers.

It catalyses the reaction GTP + H2O = 7,8-dihydroneopterin 3'-triphosphate + formate + H(+). It participates in cofactor biosynthesis; 7,8-dihydroneopterin triphosphate biosynthesis; 7,8-dihydroneopterin triphosphate from GTP: step 1/1. The polypeptide is GTP cyclohydrolase 1 (Pelagibacter ubique (strain HTCC1062)).